Here is a 255-residue protein sequence, read N- to C-terminus: MAVTDRFARRATLSRSLRLLSEFRYEQPDPARFYGALAADTATLVSDLWLAARGESVAGRTLLDVGGGPGYFASAFAAAGVGYIGVEPDPNEMHAAGPAHAGGPGSFVRASGMALPLADDSVDICLSSNVAEHVPRPWQLGAEMLRVTRPGGLAVLSYTVWLGPFGGHEMGLSHYLGGARAAARYARRHGHPAKNNYGSSLFAVSAAEGLRWAEGTGTLIAAFPRYHPRSAWWMTSVPMLREFLVSNLVLVLSPR.

The protein belongs to the methyltransferase superfamily.

This is an uncharacterized protein from Mycobacterium ulcerans (strain Agy99).